The chain runs to 386 residues: Chaperone protein DnaJ (386 aa).

The 66-residue stretch at 6–71 folds into the J domain; it reads DYYEILGVDR…QKRARYDQFG (66 aa). Residues 144 to 226 form a CR-type zinc finger; sequence GTEKEVTVSR…CGGKGRVRKH (83 aa). Cys157, Cys160, Cys174, Cys177, Cys200, Cys203, Cys214, and Cys217 together coordinate Zn(2+). 4 CXXCXGXG motif repeats span residues 157–164, 174–181, 200–207, and 214–221; these read CPTCSGSG, CRQCNGTG, CDVCHGEG, and CETCGGKG.

The protein belongs to the DnaJ family. As to quaternary structure, homodimer. It depends on Zn(2+) as a cofactor.

Its subcellular location is the cytoplasm. Participates actively in the response to hyperosmotic and heat shock by preventing the aggregation of stress-denatured proteins and by disaggregating proteins, also in an autonomous, DnaK-independent fashion. Unfolded proteins bind initially to DnaJ; upon interaction with the DnaJ-bound protein, DnaK hydrolyzes its bound ATP, resulting in the formation of a stable complex. GrpE releases ADP from DnaK; ATP binding to DnaK triggers the release of the substrate protein, thus completing the reaction cycle. Several rounds of ATP-dependent interactions between DnaJ, DnaK and GrpE are required for fully efficient folding. Also involved, together with DnaK and GrpE, in the DNA replication of plasmids through activation of initiation proteins. The sequence is that of Chaperone protein DnaJ from Acetivibrio thermocellus (strain ATCC 27405 / DSM 1237 / JCM 9322 / NBRC 103400 / NCIMB 10682 / NRRL B-4536 / VPI 7372) (Clostridium thermocellum).